A 1207-amino-acid chain; its full sequence is DNA-directed RNA polymerase, mitochondrial (1207 aa).

The N-terminal 41 residues, 1 to 41 (MSALRWTRSAAGLGRVLRSPGPHRPPSEEGTFGGFCSSRRS), are a transit peptide targeting the mitochondrion. 2 disordered regions span residues 1 to 48 (MSAL…SPRE) and 82 to 103 (KKVQ…KLEA). 2 PPR repeats span residues 232-266 (TLHM…GLSP) and 267-302 (DLCS…GFQP). The interval 702–724 (VPPPRSEAPRPARYQLPPGSTPV) is disordered. The segment at 773–1207 (FRGRTYPCPP…QVIRSTYFFS (435 aa)) is mediates interaction with TEFM. Catalysis depends on residues aspartate 893, lysine 962, and aspartate 1121.

This sequence belongs to the phage and mitochondrial RNA polymerase family. Homodimer. Component of the mitochondrial transcription initiation complex, composed at least of TFB2M, TFAM and POLRMT. In this complex TFAM recruits POLRMT to the promoter whereas TFB2M induces structural changes in POLRMT to enable promoter opening and trapping of the DNA non-template strand. Upon metabolic stress, forms a complex composed of FOXO3, SIRT3 and mitochondrial RNA polymerase POLRMT; the complex is recruited to mtDNA in a SIRT3-dependent manner. Also forms a complex composed of FOXO3, SIRT3, TFAM and POLRMT. Interacts with TFB1M and TFB2M, leading to the stimulation of transcription. Interacts with TEFM. Interacts with MTRES1.

The protein localises to the mitochondrion. The enzyme catalyses RNA(n) + a ribonucleoside 5'-triphosphate = RNA(n+1) + diphosphate. Its function is as follows. DNA-dependent RNA polymerase catalyzes the transcription of mitochondrial DNA into RNA using the four ribonucleoside triphosphates as substrates. Component of the mitochondrial transcription initiation complex, composed at least of TFB2M, TFAM and POLRMT that is required for basal transcription of mitochondrial DNA. In this complex, TFAM recruits POLRMT to a specific promoter whereas TFB2M induces structural changes in POLRMT to enable promoter opening and trapping of the DNA non-template strand. Has DNA primase activity. Catalyzes the synthesis of short RNA primers that are necessary for the initiation of lagging-strand DNA synthesis from the origin of light-strand DNA replication (OriL). The chain is DNA-directed RNA polymerase, mitochondrial from Mus musculus (Mouse).